A 338-amino-acid polypeptide reads, in one-letter code: Solute carrier family 35 member G4 (338 aa).

The interval Met-1–Gln-29 is disordered. The next 7 membrane-spanning stretches (helical) occupy residues Thr-37–Leu-57, Cys-160–Leu-180, Gly-190–Tyr-210, Thr-221–Leu-241, Leu-250–Val-270, Leu-281–Leu-301, and Val-305–Ala-325. The 126-residue stretch at Leu-49–Gly-174 folds into the EamA 1 domain. The EamA 2 domain occupies Tyr-272–Ala-325.

This sequence belongs to the SLC35G solute transporter family.

The protein resides in the membrane. This chain is Solute carrier family 35 member G4 (SLC35G4), found in Homo sapiens (Human).